Reading from the N-terminus, the 227-residue chain is E3 ubiquitin-protein ligase ZNRF1 (227 aa).

The interval 1–42 (MGGKQSTAARSRGPFPGVSTDDSAVPPPGGAPHFGHYRTGGG) is disordered. G2 carries N-myristoyl glycine lipidation. The segment at 2–10 (GGKQSTAAR) is required for endosomal and lysosomal localization and myristoylation. 3 positions are modified to phosphoserine: S50, S52, and S53. Residues 68-105 (PFGLYTPASRGTGDSERAPGGGGSASDSTYAHGNGYQE) are disordered. The residue at position 103 (Y103) is a Phosphotyrosine; by SRC. Residue S123 is modified to Phosphoserine. Residues 184–225 (CVICLEELLQGDTIARLPCLCIYHKSCIDSWFEVNRSCPEHP) form an RING-type; atypical zinc finger.

As to quaternary structure, interacts with AKT1, GLUL and TUBB2A. Interacts with ZNRF2. Interacts (via its RING domain) with UBE2N. Interacts (when phosphorylated) with YWHAE. N-myristoylation targets ZNRF1 to intracellular membranes. In terms of processing, phosphorylated by SRC at Tyr-103; leading to 'Lys-63'-linked ubiquitination of TLR3, lysosomal trafficking and degradation. Expressed primarily in the nervous system, with expression higher in developing brain relative to adult. Expressed at low levels in testis and thymus.

It is found in the endosome. Its subcellular location is the lysosome. The protein resides in the membrane. The protein localises to the cytoplasmic vesicle. It localises to the secretory vesicle. It is found in the synaptic vesicle membrane. It carries out the reaction S-ubiquitinyl-[E2 ubiquitin-conjugating enzyme]-L-cysteine + [acceptor protein]-L-lysine = [E2 ubiquitin-conjugating enzyme]-L-cysteine + N(6)-ubiquitinyl-[acceptor protein]-L-lysine.. The protein operates within protein modification; protein ubiquitination. Its function is as follows. E3 ubiquitin-protein ligase that plays a role in different processes including cell differentiation, receptor recycling or regulation of inflammation. Mediates the ubiquitination of AKT1 and GLUL, thereby playing a role in neuron cells differentiation. Plays a role in the establishment and maintenance of neuronal transmission and plasticity. Regulates Schwann cells differentiation by mediating ubiquitination of GLUL. Promotes neurodegeneration by mediating 'Lys-48'-linked polyubiquitination and subsequent degradation of AKT1 in axons: degradation of AKT1 prevents AKT1-mediated phosphorylation of GSK3B, leading to GSK3B activation and phosphorylation of DPYSL2/CRMP2 followed by destabilization of microtubule assembly in axons. Ubiquitinates the Na(+)/K(+) ATPase alpha-1 subunit/ATP1A1 and thereby influences its endocytosis and/or degradation. Controls ligand-induced EGFR signaling via mediating receptor ubiquitination and recruitment of the ESCRT machinery. Acts as a negative feedback mechanism controlling TLR3 trafficking by mediating TLR3 'Lys-63'-linked polyubiquitination to reduce type I IFN production. Modulates inflammation by promoting caveolin-1/CAV1 ubiquitination and degradation to regulate TLR4-activated immune response. In Homo sapiens (Human), this protein is E3 ubiquitin-protein ligase ZNRF1 (ZNRF1).